Reading from the N-terminus, the 175-residue chain is Large ribosomal subunit protein bL17m (175 aa).

A mitochondrion-targeting transit peptide spans 1–8; the sequence is MRLSVCAA. Residues 155–175 form a disordered region; sequence DLSQSQEASNHSSHTAQTPGI. Positions 157-175 are enriched in polar residues; sequence SQSQEASNHSSHTAQTPGI.

Belongs to the bacterial ribosomal protein bL17 family. Component of the mitochondrial ribosome large subunit (39S) which comprises a 16S rRNA and about 50 distinct proteins.

Its subcellular location is the mitochondrion. The chain is Large ribosomal subunit protein bL17m (MRPL17) from Pongo abelii (Sumatran orangutan).